The sequence spans 516 residues: Putative thymidine phosphorylase (516 aa).

The protein belongs to the thymidine/pyrimidine-nucleoside phosphorylase family. Type 2 subfamily.

The enzyme catalyses thymidine + phosphate = 2-deoxy-alpha-D-ribose 1-phosphate + thymine. The protein is Putative thymidine phosphorylase of Methylococcus capsulatus (strain ATCC 33009 / NCIMB 11132 / Bath).